The sequence spans 434 residues: 23S rRNA (uracil(1939)-C(5))-methyltransferase RlmD (434 aa).

Positions 10-68 constitute a TRAM domain; sequence RVTTRQIITVTVNDLDPFGQGVARHQGKALFVSGVLPQEQAEVVLVEDKKQYARAQVKR. [4Fe-4S] cluster-binding residues include C81, C87, C90, and C162. Positions 265, 294, 299, 315, 342, and 363 each coordinate S-adenosyl-L-methionine. Catalysis depends on C389, which acts as the Nucleophile.

Belongs to the class I-like SAM-binding methyltransferase superfamily. RNA M5U methyltransferase family. RlmD subfamily.

The enzyme catalyses uridine(1939) in 23S rRNA + S-adenosyl-L-methionine = 5-methyluridine(1939) in 23S rRNA + S-adenosyl-L-homocysteine + H(+). Its function is as follows. Catalyzes the formation of 5-methyl-uridine at position 1939 (m5U1939) in 23S rRNA. In Klebsiella pneumoniae (strain 342), this protein is 23S rRNA (uracil(1939)-C(5))-methyltransferase RlmD.